Consider the following 695-residue polypeptide: MAREFSLEKTRNIGIMAHIDAGKTTTTERILFYTGRIHKIGETHEGASQMDWMEQEQERGITITSAATTAQWKGYRVNIIDTPGHVDFTVEVERSLRVLDGAVAVLDAQSGVEPQTETVWRQATTYGVPRVVFVNKMDKIGADFLYSVGTLHERLAANAHPIQLPIGAEDTFEGIIDLIEMNALYYEDDLGNDPHIKEIPADLKDLADEYRGKLVEAVAELDEELMMKYLEGEEITKEELKAGIRKGTLNVEFYPVVCGTAFKNKGVQPMLDAVLDYLPAPTDVPAINGVLPDGEEAARHADDSEPFSSLAFKVMTDPYVGRLTFFRVYSGTLNSGSYVQNSTKGKRERVGRILQMHANHREEISIVYAGDIAAAVGLKDTTTGDTLCDEKEQIILESMEFPEPVIQVAIEPKSKADQDKMGQALAKLAEEDPTFRAETDQETGQTLISGMGELHLDILVDRMKREFRVEANVGDPQVSYRETFRKSAQVEGKFVRQSGGRGQYGHVWIEFGPNEEGKGFEFENAIVGGVVPREYIPAVQAGLEGALDNGVLAGYPLIDIKAKLYDGSYHDVDSNEMAFKVAASMALRNAAKKCDPVILEPMMAVEVVIPEEYLGDIMGNITSRRGRVDGMEARGNAQVVRAFVPLANMFGYATHLRSGTQGRGVYTMQFDHYEEVPKSIAEEIIKANGGNNKED.

The tr-type G domain occupies 8-282 (EKTRNIGIMA…AVLDYLPAPT (275 aa)). GTP contacts are provided by residues 17 to 24 (AHIDAGKT), 81 to 85 (DTPGH), and 135 to 138 (NKMD).

This sequence belongs to the TRAFAC class translation factor GTPase superfamily. Classic translation factor GTPase family. EF-G/EF-2 subfamily.

The protein resides in the cytoplasm. Its function is as follows. Catalyzes the GTP-dependent ribosomal translocation step during translation elongation. During this step, the ribosome changes from the pre-translocational (PRE) to the post-translocational (POST) state as the newly formed A-site-bound peptidyl-tRNA and P-site-bound deacylated tRNA move to the P and E sites, respectively. Catalyzes the coordinated movement of the two tRNA molecules, the mRNA and conformational changes in the ribosome. The sequence is that of Elongation factor G from Listeria innocua serovar 6a (strain ATCC BAA-680 / CLIP 11262).